Reading from the N-terminus, the 72-residue chain is Translation initiation factor IF-1 (72 aa).

One can recognise an S1-like domain in the interval methionine 1–lysine 72.

This sequence belongs to the IF-1 family. As to quaternary structure, component of the 30S ribosomal translation pre-initiation complex which assembles on the 30S ribosome in the order IF-2 and IF-3, IF-1 and N-formylmethionyl-tRNA(fMet); mRNA recruitment can occur at any time during PIC assembly.

It localises to the cytoplasm. Functionally, one of the essential components for the initiation of protein synthesis. Stabilizes the binding of IF-2 and IF-3 on the 30S subunit to which N-formylmethionyl-tRNA(fMet) subsequently binds. Helps modulate mRNA selection, yielding the 30S pre-initiation complex (PIC). Upon addition of the 50S ribosomal subunit IF-1, IF-2 and IF-3 are released leaving the mature 70S translation initiation complex. This Albidiferax ferrireducens (strain ATCC BAA-621 / DSM 15236 / T118) (Rhodoferax ferrireducens) protein is Translation initiation factor IF-1.